The primary structure comprises 651 residues: Threonine--tRNA ligase (651 aa).

One can recognise a TGS domain in the interval 1–61 (MPTIQLPDGS…DKDVSLRIIT (61 aa)). The interval 242–533 (DHRLLAKKMD…LLEESAGKLP (292 aa)) is catalytic. Zn(2+)-binding residues include C333, H384, and H510. Residues 631–651 (ISQRSRKSPAPSPLFPVGGES) are disordered.

The protein belongs to the class-II aminoacyl-tRNA synthetase family. As to quaternary structure, homodimer. The cofactor is Zn(2+).

It is found in the cytoplasm. It carries out the reaction tRNA(Thr) + L-threonine + ATP = L-threonyl-tRNA(Thr) + AMP + diphosphate + H(+). Functionally, catalyzes the attachment of threonine to tRNA(Thr) in a two-step reaction: L-threonine is first activated by ATP to form Thr-AMP and then transferred to the acceptor end of tRNA(Thr). Also edits incorrectly charged L-seryl-tRNA(Thr). The chain is Threonine--tRNA ligase from Coxiella burnetii (strain RSA 493 / Nine Mile phase I).